The chain runs to 381 residues: Succinyl-diaminopimelate desuccinylase 1 (381 aa).

His-70 serves as a coordination point for Zn(2+). Asp-72 is an active-site residue. Asp-103 serves as a coordination point for Zn(2+). The active-site Proton acceptor is the Glu-136. The Zn(2+) site is built by Glu-137, Glu-165, and His-354.

This sequence belongs to the peptidase M20A family. DapE subfamily. As to quaternary structure, homodimer. Zn(2+) is required as a cofactor. Co(2+) serves as cofactor.

It carries out the reaction N-succinyl-(2S,6S)-2,6-diaminopimelate + H2O = (2S,6S)-2,6-diaminopimelate + succinate. It functions in the pathway amino-acid biosynthesis; L-lysine biosynthesis via DAP pathway; LL-2,6-diaminopimelate from (S)-tetrahydrodipicolinate (succinylase route): step 3/3. In terms of biological role, catalyzes the hydrolysis of N-succinyl-L,L-diaminopimelic acid (SDAP), forming succinate and LL-2,6-diaminopimelate (DAP), an intermediate involved in the bacterial biosynthesis of lysine and meso-diaminopimelic acid, an essential component of bacterial cell walls. The chain is Succinyl-diaminopimelate desuccinylase 1 from Ruegeria sp. (strain TM1040) (Silicibacter sp.).